A 267-amino-acid polypeptide reads, in one-letter code: Trehalose-phosphate phosphatase (267 aa).

Catalysis depends on Asp20, which acts as the Nucleophile. Residues Asp20, Asp22, and Asp198 each contribute to the Mg(2+) site. 20–22 contributes to the substrate binding site; the sequence is DLD.

It belongs to the trehalose phosphatase family. Mg(2+) serves as cofactor.

The catalysed reaction is alpha,alpha-trehalose 6-phosphate + H2O = alpha,alpha-trehalose + phosphate. The protein operates within glycan biosynthesis; trehalose biosynthesis. Removes the phosphate from trehalose 6-phosphate to produce free trehalose. This Salmonella typhimurium (strain LT2 / SGSC1412 / ATCC 700720) protein is Trehalose-phosphate phosphatase (otsB).